Consider the following 691-residue polypeptide: MSNEKQQWDDAYCLAEEMHDAGRPFKREELNIADQFICSRFSTIFEYDPYKDTYGFRNQELTHAIPVKSKCRHISDVDILELKKNTANADIRFPSYLNICPVYAMHPFTVLAFDLSKPVPMGMNASMENAAPNMKSPTEAEITPGTIYIFKHRDNKCYRCVILFEDGDNNVSDADRKYMVAFLDTPQVVSVKLKTLFHLGKFTIESYPCALYCCRAVGILEIRKDFGADLNGQINEFYKDKVKRKSGVHALIYKKDDRGDKLIFDCPSILGTSMTMALEIKDVIGHRSVAENDPTALSYDELVSKQLPTVDIDDHNSSVVLDLEESVIAQELGSTNGADCPCNNDNIDDFMQSQRQNPLDNNRDNWDRINESRSSMQSFAINQSQAITANPTPQPTFDESSGEVQTIPESINNLALNGRYLEDGRGTEEIREERSVESRQIGNQVVSQASCNYLEARQNSTQTANAESVCAIISESHAALPTDIQVIPSQHVLNENNHTVLPSVAPIIRNATGHSHIFGRQIPSPAFRRESLSSGNSIQVATFAATTGPCGSNTSRPTAQNTANSSINQDMSISNSSTNARLITIAQDNLNDTENWPNSEREQSATEMESGAEATTNSAVDEFAQVSDDMKGLADSMINFLRLTANSNNQDAFKANIFAMELISTKIPNQLTKRFFTLKIAEAKSLAEGFN.

In terms of domain architecture, Tudor; degenerate spans 139-204 (EAEITPGTIY…TLFHLGKFTI (66 aa)). 2 disordered regions span residues 547–573 (TGPC…DMSI) and 588–618 (DNLN…TTNS). 2 stretches are compositionally biased toward polar residues: residues 549–573 (PCGS…DMSI) and 588–598 (DNLNDTENWPN).

The protein localises to the cytoplasm. Its subcellular location is the perinuclear region. Its function is as follows. Acts downstream of piRNA production to promote mediator complex-dependent endogenous siRNA biogenesis from piRNA-target mRNAs in the RNA interference pathway in germ cells. Not required to identify target mRNA by the piRNA pathway. Plays a role in both spermatogenesis and oogenesis and in maintaining fertility over multiple generations, probably by directing mutator-dependent silencing to piRNA-targeted genes. The chain is Protein simr-1 from Caenorhabditis elegans.